We begin with the raw amino-acid sequence, 409 residues long: MPFSRTLLALSLGMALLQNPAFAAPPLSMTDGVAQVNTQDSNAWVEINKAAFEHNIRTLQTALAGKSQICAVLKADAYGHGIGLLMPSVIAMGVPCVGVASNEEARVVRESGFKGQLIRVRTAALSELEAALPYNMEELVGNLDFAVKASLIAEDHGRPLVVHLGLNSSGMSRNGVDMTTAQGRRDAVAITKVPNLEVRAIMTHFAVEDAADVRAGLKAFNQQAQWLMNVAQLDRSKITLHAANSFATLEVPESHLDMVRPGGALFGDTVPSHTEYKRVMQFKSHVASVNSYPKGNTVGYGRTYTLGRDSRLANITVGYSDGYRRAFTNKGIVLINGHRVPVVGKVSMNTLMVDVTDAPDVKSGDEVVLFGHQGKAEITQAEIEDINGALLADLYTVWGNSNPKILKDQ.

The first 23 residues, 1-23 (MPFSRTLLALSLGMALLQNPAFA), serve as a signal peptide directing secretion. C70 and C96 are oxidised to a cystine. Residue K74 is the Proton acceptor of the active site. K74 carries the post-translational modification N6-(pyridoxal phosphate)lysine. R173 contributes to the substrate binding site. Residue Y300 is the Proton acceptor of the active site. Substrate is bound at residue M348.

It belongs to the alanine racemase family. Bsr subfamily. In terms of assembly, homodimer. Requires pyridoxal 5'-phosphate as cofactor.

It localises to the periplasm. The catalysed reaction is an L-alpha-amino acid = a D-alpha-amino acid. It carries out the reaction L-lysine = D-lysine. The enzyme catalyses L-arginine = D-arginine. It catalyses the reaction L-ornithine = D-ornithine. The catalysed reaction is L-alanine = D-alanine. It carries out the reaction L-methionine = D-methionine. Its function is as follows. Amino-acid racemase able to utilize a broad range of substrates. Is mostly active with lysine and arginine and, to a lesser extent, with ornithine, whereas is about 10 times less active with alanine, methionine and ethionine. With phenylalanine as substrate only a trace activity is detectable, and is inactive with glutamate. Plays a key role in the catabolism of D-arginine and D-lysine, that allows P.taetrolens strain NBRC 3460 to grow on these basic D-amino acids as a sole carbon source. In Pseudomonas taetrolens, this protein is Broad specificity amino-acid racemase.